Reading from the N-terminus, the 255-residue chain is Na(+)-translocating NADH-quinone reductase subunit C (255 aa).

Residues 12-32 form a helical membrane-spanning segment; the sequence is LFVVIALSLVCSIIVSTAAVG. An FMN phosphoryl threonine modification is found at threonine 223.

This sequence belongs to the NqrC family. Composed of six subunits; NqrA, NqrB, NqrC, NqrD, NqrE and NqrF. FMN serves as cofactor.

The protein resides in the cell inner membrane. The catalysed reaction is a ubiquinone + n Na(+)(in) + NADH + H(+) = a ubiquinol + n Na(+)(out) + NAD(+). NQR complex catalyzes the reduction of ubiquinone-1 to ubiquinol by two successive reactions, coupled with the transport of Na(+) ions from the cytoplasm to the periplasm. NqrA to NqrE are probably involved in the second step, the conversion of ubisemiquinone to ubiquinol. This Vibrio anguillarum (Listonella anguillarum) protein is Na(+)-translocating NADH-quinone reductase subunit C.